Reading from the N-terminus, the 559-residue chain is S-layer protein (559 aa).

Residues methionine 1–alanine 28 form the signal peptide. N-linked (GlcNAc...) asparagine glycans are attached at residues asparagine 108, asparagine 130, asparagine 155, asparagine 222, and asparagine 373.

This sequence belongs to the Mj S-layer protein family.

Its subcellular location is the secreted. It is found in the cell wall. The protein resides in the S-layer. In terms of biological role, S-layer protein. The S-layer is a paracrystalline mono-layered assembly of proteins which coat the surface of the cell. This chain is S-layer protein, found in Methanothermococcus thermolithotrophicus (Methanococcus thermolithotrophicus).